A 34-amino-acid chain; its full sequence is Phalloidin proprotein (34 aa).

The propeptide occupies 1 to 10 (MSDINTTCLP). The cyclopeptide (Ala-Pro) cross-link spans 11-17 (AWLATCP). The segment at residues 12–16 (WLATC) is a cross-link (2'-cysteinyl-6'-hydroxytryptophan sulfoxide (Trp-Cys)). Residues 18 to 34 (CTGDDVNPTLTCGESLC) constitute a propeptide that is removed on maturation.

It belongs to the MSDIN fungal toxin family. Processed by the macrocyclase-peptidase enzyme POPB to yield a toxic cyclic heptapeptide. POPB first removes 10 residues from the N-terminus. Conformational trapping of the remaining peptide forces the enzyme to release this intermediate rather than proceed to macrocyclization. The enzyme rebinds the remaining peptide in a different conformation and catalyzes macrocyclization of the N-terminal 7 residues.

Toxin that belongs to the bicyclic heptapeptides called phallotoxins. Although structurally related to amatoxins, phallotoxins have a different mode of action, which is the stabilization of F-actin. Phallotoxins are poisonous when administered parenterally, but not orally because of poor absorption. The polypeptide is Phalloidin proprotein (Amanita phalloides (Death cap)).